A 313-amino-acid polypeptide reads, in one-letter code: Olfactory receptor 1D2 (313 aa).

Over 1–25 the chain is Extracellular; the sequence is MDGGNQSEGSEFLLLGMSESPEQQR. Residue Asn5 is glycosylated (N-linked (GlcNAc...) asparagine). The helical transmembrane segment at 26-49 threads the bilayer; sequence ILFWMFLSMYLVTVLGNVLIILAI. The Cytoplasmic segment spans residues 50 to 57; that stretch reads SSDSRLHT. Residues 58–79 form a helical membrane-spanning segment; that stretch reads PMYFFLANLSFTDLFFVTNTIP. Residues 80 to 100 lie on the Extracellular side of the membrane; sequence KMLVNLQSQDKAISYAGCLTQ. The cysteines at positions 97 and 189 are disulfide-linked. Residues 101–120 form a helical membrane-spanning segment; it reads LYFLLSLVTLDNLILAVMAY. At 121-139 the chain is on the cytoplasmic side; that stretch reads DRYVAICCPLHYVTAMSPR. Residues 140-158 form a helical membrane-spanning segment; the sequence is LCILLLSLCWVFSVLYGLI. Residues 159–196 lie on the Extracellular side of the membrane; sequence HTLLMTRVTFCGSRKIHYLFCEMYFLLRLACSNIQINH. Asn195 carries N-linked (GlcNAc...) asparagine glycosylation. A helical membrane pass occupies residues 197 to 219; it reads TVLXATGCFIFLIPLGFMIXSYA. The Cytoplasmic portion of the chain corresponds to 220–236; the sequence is RIVRAILRIPSATGKYK. Residues 237 to 259 form a helical membrane-spanning segment; the sequence is AFSTCASHLAVVSLFYGTLGMVY. The Extracellular segment spans residues 260 to 271; it reads LQPLQTYSTKDS. The helical transmembrane segment at 272 to 291 threads the bilayer; that stretch reads VATVMYAVVTPMMNPFIYSL. Topologically, residues 292-313 are cytoplasmic; sequence RNKDIHGALGRLLQGKAFQKLT.

Belongs to the G-protein coupled receptor 1 family.

It is found in the cell membrane. Odorant receptor. This Pongo pygmaeus (Bornean orangutan) protein is Olfactory receptor 1D2 (OR1D2).